A 132-amino-acid chain; its full sequence is MAKCSYVFCAVLLIFIVAIGEMEAAGSKLCEKTSKTYSGKCDNKKCDKKCIEWEKAQHGACHKREAGKESCFCYFDCSKSPPGATPAPPGAAPPPAAGGSPSPPADGGSPPPPADGGSPPVDGGSPPPPSTH.

The N-terminal stretch at 1–24 is a signal peptide; the sequence is MAKCSYVFCAVLLIFIVAIGEMEA. The segment at 28–77 is defensin-like domain; that stretch reads KLCEKTSKTYSGKCDNKKCDKKCIEWEKAQHGACHKREAGKESCFCYFDC. Disulfide bonds link Cys-30–Cys-77, Cys-41–Cys-61, Cys-46–Cys-71, and Cys-50–Cys-73. Epitope recognized by IgE antibodies of mugwort pollen-sensitized patients regions lie at residues 64 to 70 and 79 to 87; these read REAGKES and KSPPGATPA. The interval 81 to 132 is disordered; that stretch reads PPGATPAPPGAAPPPAAGGSPSPPADGGSPPPPADGGSPPVDGGSPPPPSTH. The span at 83 to 114 shows a compositional bias: pro residues; the sequence is GATPAPPGAAPPPAAGGSPSPPADGGSPPPPA. The segment covering 115–124 has biased composition (low complexity); that stretch reads DGGSPPVDGG.

This sequence in the N-terminal section; belongs to the DEFL family. The mature protein extracted from the plant exhibits an average rate of 76% of hydroxyprolines. Post-translationally, O-glycosylated. O-linkage of 3 galactoses plus 9-16 or 21-23 arabinose residues attached on one or two hydroxyprolines.

It localises to the secreted. The sequence is that of Major pollen allergen Art v 1 from Artemisia vulgaris (Mugwort).